The primary structure comprises 481 residues: Argininosuccinate lyase (481 aa).

Belongs to the lyase 1 family. Argininosuccinate lyase subfamily.

The protein resides in the cytoplasm. The enzyme catalyses 2-(N(omega)-L-arginino)succinate = fumarate + L-arginine. Its pathway is amino-acid biosynthesis; L-arginine biosynthesis; L-arginine from L-ornithine and carbamoyl phosphate: step 3/3. In Methanococcus maripaludis (strain DSM 14266 / JCM 13030 / NBRC 101832 / S2 / LL), this protein is Argininosuccinate lyase.